The following is a 1531-amino-acid chain: Multidrug resistance-associated protein 1 (1531 aa).

Topologically, residues 1 to 33 (MALRGFCSADGSDPLWDWNVTWNTSNPDFTKCF) are extracellular. 2 N-linked (GlcNAc...) asparagine glycosylation sites follow: Asn-19 and Asn-23. A helical membrane pass occupies residues 34-54 (QNTVLVWVPCFYLWACFPFYF). Topologically, residues 55–74 (LYLSRHDRGYIQMTPLNKTK) are cytoplasmic. A helical transmembrane segment spans residues 75 to 95 (TALGFLLWIVCWADLFYSFWE). The Extracellular portion of the chain corresponds to 96–100 (RSRGI). Residues 101–121 (FLAPVFLVSPTLLGITMLLAT) form a helical membrane-spanning segment. Residues 122 to 133 (FLIQLERRKGVQ) are Cytoplasmic-facing. Residues 134–154 (SSGIMLTFWLVALVCALAILR) traverse the membrane as a helical segment. Over 155-172 (SKIMTALKEDAQVDLFRD) the chain is Extracellular. Residues 173 to 193 (ITFYVYFSLLLIQLVLSCFSD) form a helical membrane-spanning segment. The Cytoplasmic portion of the chain corresponds to 194 to 316 (RSPLFSETIH…KEWNPSLFKV (123 aa)). Tyr-277 bears the Phosphotyrosine mark. Ser-289 bears the Phosphoserine mark. A helical membrane pass occupies residues 317–337 (LYKTFGPYFLMSFFFKAIHDL). Residues 325-608 (FLMSFFFKAI…LPMVISSIVQ (284 aa)) enclose the ABC transmembrane type-1 1 domain. At 338–363 (MMFSGPQILKLLIKFVNDTKAPDWQG) the chain is on the extracellular side. The helical transmembrane segment at 364–384 (YFYTVLLFVTACLQTLVLHQY) threads the bilayer. Topologically, residues 385–440 (FHICFVSGMRIKTAVIGAVYRKALVITNSARKSSTVGEIVNLMSVDAQRFMDLATY) are cytoplasmic. Residues 441 to 461 (INMIWSAPLQVILALYLLWLN) form a helical membrane-spanning segment. The Extracellular segment spans residues 462–464 (LGP). A helical transmembrane segment spans residues 465 to 485 (SVLAGVAVMVLMVPVNAVMAM). Topologically, residues 486–547 (KTKTYQVAHM…VLKKSAYLSA (62 aa)) are cytoplasmic. N6-succinyllysine is present on Lys-503. Residues 548-568 (VGTFTWVCTPFLVALCTFAVY) form a helical membrane-spanning segment. Residues 569–590 (VTIDENNILDAQTAFVSLALFN) are Extracellular-facing. Residues 591 to 611 (ILRFPLNILPMVISSIVQASV) form a helical membrane-spanning segment. Over 612–967 (SLKRLRIFLS…VKLSVYWDYM (356 aa)) the chain is Cytoplasmic. The 225-residue stretch at 644-868 (ITVRNATFTW…DGAFAEFLRT (225 aa)) folds into the ABC transporter 1 domain. Residues Trp-653, 678–685 (GQVGCGKS), and Gln-713 contribute to the ATP site. Residues Ser-905, Ser-915, and Ser-930 each carry the phosphoserine modification. Residues 968–988 (KAIGLFISFLSIFLFMCNHVS) form a helical membrane-spanning segment. Residues 975-1256 (SFLSIFLFMC…LVRMSSEMET (282 aa)) enclose the ABC transmembrane type-1 2 domain. Over 989-1025 (ALASNYWLSLWTDDPIVNGTQEHTKVRLSVYGALGIS) the chain is Extracellular. N-linked (GlcNAc...) asparagine glycosylation occurs at Asn-1006. A helical transmembrane segment spans residues 1026–1046 (QGIAVFGYSMAVSIGGILASR). At 1047–1089 (CLHVDLLHSILRSPMSFFERTPSGNLVNRFSKELDTVDSMIPE) the chain is on the cytoplasmic side. The chain crosses the membrane as a helical span at residues 1090–1110 (VIKMFMGSLFNVIGACIVILL). Position 1111 (Ala-1111) is a topological domain, extracellular. The helical transmembrane segment at 1112–1132 (TPIAAIIIPPLGLIYFFVQRF) threads the bilayer. The Cytoplasmic portion of the chain corresponds to 1133 to 1203 (YVASSRQLKR…VANRWLAVRL (71 aa)). A helical membrane pass occupies residues 1204-1224 (ECVGNCIVLFAALFAVISRHS). Residues 1225–1226 (LS) lie on the Extracellular side of the membrane. The helical transmembrane segment at 1227–1247 (AGLVGLSVSYSLQVTTYLNWL) threads the bilayer. The Cytoplasmic portion of the chain corresponds to 1248-1531 (VRMSSEMETN…YSMAKDAGLV (284 aa)). Residues 1293–1527 (VEFRNYCLRY…RGLFYSMAKD (235 aa)) form the ABC transporter 2 domain. 1327 to 1334 (GRTGAGKS) is a binding site for ATP.

Belongs to the ABC transporter superfamily. ABCC family. Conjugate transporter (TC 3.A.1.208) subfamily. In terms of assembly, (Microbial infection) Interacts with human cytomegalovirus protein UL138; this interaction mediates MRP1 degradation via the lysosome. In terms of tissue distribution, lung, testis and peripheral blood mononuclear cells.

Its subcellular location is the cell membrane. It is found in the basolateral cell membrane. The catalysed reaction is ATP + H2O + xenobioticSide 1 = ADP + phosphate + xenobioticSide 2.. It carries out the reaction an S-substituted glutathione(in) + ATP + H2O = an S-substituted glutathione(out) + ADP + phosphate + H(+). The enzyme catalyses sphing-4-enine 1-phosphate(in) + ATP + H2O = sphing-4-enine 1-phosphate(out) + ADP + phosphate + H(+). It catalyses the reaction leukotriene C4(in) + ATP + H2O = leukotriene C4(out) + ADP + phosphate + H(+). The catalysed reaction is 17beta-estradiol 17-O-(beta-D-glucuronate)(in) + ATP + H2O = 17beta-estradiol 17-O-(beta-D-glucuronate)(out) + ADP + phosphate + H(+). It carries out the reaction daunorubicin(in) + ATP + H2O = daunorubicin(out) + ADP + phosphate + H(+). The enzyme catalyses vincristine(in) + ATP + H2O = vincristine(out) + ADP + phosphate + H(+). It catalyses the reaction 2',3'-cGAMP(in) + ATP + H2O = 2',3'-cGAMP(out) + ADP + phosphate + H(+). The catalysed reaction is S-[(2E,6E,10E)-geranylgeranyl]-L-glutathione(in) + ATP + H2O = S-[(2E,6E,10E)-geranylgeranyl]-L-glutathione(out) + ADP + phosphate + H(+). It carries out the reaction prostaglandin A2-S-(R)-glutathione(in) + ATP + H2O = prostaglandin A2-S-(R)-glutathione(out) + ADP + phosphate + H(+). The enzyme catalyses prostaglandin A2-S-(S)-glutathione(in) + ATP + H2O = prostaglandin A2-S-(S)-glutathione(out) + ADP + phosphate + H(+). With respect to regulation, MK 571 inhibits sphingosine 1-phosphate and leukotriene C4 export. Functionally, mediates export of organic anions and drugs from the cytoplasm. Mediates ATP-dependent transport of glutathione and glutathione conjugates, leukotriene C4, estradiol-17-beta-o-glucuronide, methotrexate, antiviral drugs and other xenobiotics. Confers resistance to anticancer drugs by decreasing accumulation of drug in cells, and by mediating ATP- and GSH-dependent drug export. Hydrolyzes ATP with low efficiency. Catalyzes the export of sphingosine 1-phosphate from mast cells independently of their degranulation. Participates in inflammatory response by allowing export of leukotriene C4 from leukotriene C4-synthesizing cells. Mediates ATP-dependent, GSH-independent cyclic GMP-AMP (cGAMP) export. Thus, by limiting intracellular cGAMP concentrations negatively regulates the cGAS-STING pathway. Exports S-geranylgeranyl-glutathione (GGG) in lymphoid cells and stromal compartments of lymphoid organs. ABCC1 (via extracellular transport) with GGT5 (via GGG catabolism) establish GGG gradients within lymphoid tissues to position P2RY8-positive lymphocytes at germinal centers in lymphoid follicles and restrict their chemotactic transmigration from blood vessels to the bone marrow parenchyma. Mediates basolateral export of GSH-conjugated R- and S-prostaglandin A2 diastereomers in polarized epithelial cells. The chain is Multidrug resistance-associated protein 1 from Homo sapiens (Human).